Here is a 203-residue protein sequence, read N- to C-terminus: N-(5'-phosphoribosyl)anthranilate isomerase (203 aa).

This sequence belongs to the TrpF family.

The enzyme catalyses N-(5-phospho-beta-D-ribosyl)anthranilate = 1-(2-carboxyphenylamino)-1-deoxy-D-ribulose 5-phosphate. It participates in amino-acid biosynthesis; L-tryptophan biosynthesis; L-tryptophan from chorismate: step 3/5. In Geotalea uraniireducens (strain Rf4) (Geobacter uraniireducens), this protein is N-(5'-phosphoribosyl)anthranilate isomerase.